Reading from the N-terminus, the 974-residue chain is Protein bicaudal C homolog 1 (974 aa).

The disordered stretch occupies residues 1–50 (MAAQGEPGYLAAQSDPGSNSERSTDSPVPGSEDDLVAGATLHSPEWSEER). Phosphoserine occurs at positions 26, 31, and 43. KH domains follow at residues 132–199 (RVTL…RVRI) and 284–348 (PVST…RQYL). K398 bears the N6-acetyllysine mark. Phosphoserine is present on residues S576, S612, and S679. Disordered stretches follow at residues 593-644 (VLSA…GDLK), 665-719 (GTKN…HLAP), and 783-846 (YKPT…KSTE). Positions 602 to 619 (SIQTSGSEQTSPKSSPTE) are enriched in polar residues. The span at 690–703 (LADKKAPGSERAAE) shows a compositional bias: basic and acidic residues. Residues 873 to 936 (FKGSDLPELF…LLAISELNKN (64 aa)) enclose the SAM domain.

Belongs to the BicC family. Interacts (via KH domains) with ANKS6 (via SAM domain) in an RNA-dependent manner. Interacts with ANKS3.

The protein resides in the cytoplasm. In terms of biological role, putative RNA-binding protein. Acts as a negative regulator of Wnt signaling. May be involved in regulating gene expression during embryonic development. This chain is Protein bicaudal C homolog 1 (BICC1), found in Homo sapiens (Human).